A 121-amino-acid polypeptide reads, in one-letter code: Small ribosomal subunit protein bS6 (121 aa).

Residues 94–121 form a disordered region; it reads KAETGPSAVMKRVEKEEARKSSQQETAA. Basic and acidic residues predominate over residues 104 to 115; that stretch reads KRVEKEEARKSS.

This sequence belongs to the bacterial ribosomal protein bS6 family.

In terms of biological role, binds together with bS18 to 16S ribosomal RNA. This chain is Small ribosomal subunit protein bS6, found in Leptothrix cholodnii (strain ATCC 51168 / LMG 8142 / SP-6) (Leptothrix discophora (strain SP-6)).